Consider the following 203-residue polypeptide: Peptide deformylase (203 aa).

Positions 130 and 173 each coordinate Fe cation. Glu-174 is a catalytic residue. His-177 provides a ligand contact to Fe cation.

The protein belongs to the polypeptide deformylase family. Requires Fe(2+) as cofactor.

The enzyme catalyses N-terminal N-formyl-L-methionyl-[peptide] + H2O = N-terminal L-methionyl-[peptide] + formate. Functionally, removes the formyl group from the N-terminal Met of newly synthesized proteins. Requires at least a dipeptide for an efficient rate of reaction. N-terminal L-methionine is a prerequisite for activity but the enzyme has broad specificity at other positions. The protein is Peptide deformylase of Streptococcus pneumoniae serotype 19F (strain G54).